Consider the following 114-residue polypeptide: uncharacterized protein (114 aa).

The region spanning 13–99 (YYAVIFSSVK…VWYESYAVRV (87 aa)) is the ABM domain.

This is an uncharacterized protein from Bacillus subtilis (strain 168).